The chain runs to 270 residues: NAD(P)H-hydrate epimerase (270 aa).

Residues 25-234 (FQQLMDLMQN…DLLAPEAIYQ (210 aa)) enclose the YjeF N-terminal domain. 73 to 77 (DNGGQ) is a binding site for (6S)-NADPHX. The K(+) site is built by asparagine 74 and aspartate 144. Residues 148–154 (GVGLYGH) and glutamate 177 contribute to the (6S)-NADPHX site. Residue threonine 180 participates in K(+) binding.

It belongs to the NnrE/AIBP family. K(+) is required as a cofactor.

The catalysed reaction is (6R)-NADHX = (6S)-NADHX. The enzyme catalyses (6R)-NADPHX = (6S)-NADPHX. Functionally, catalyzes the epimerization of the S- and R-forms of NAD(P)HX, a damaged form of NAD(P)H that is a result of enzymatic or heat-dependent hydration. This is a prerequisite for the S-specific NAD(P)H-hydrate dehydratase to allow the repair of both epimers of NAD(P)HX. This chain is NAD(P)H-hydrate epimerase, found in Legionella pneumophila serogroup 1 (strain 2300/99 Alcoy).